The sequence spans 318 residues: Protein RecA (318 aa).

An ATP-binding site is contributed by G53–T60.

This sequence belongs to the RecA family.

The protein localises to the cytoplasm. In terms of biological role, can catalyze the hydrolysis of ATP in the presence of single-stranded DNA, the ATP-dependent uptake of single-stranded DNA by duplex DNA, and the ATP-dependent hybridization of homologous single-stranded DNAs. It interacts with LexA causing its activation and leading to its autocatalytic cleavage. The chain is Protein RecA from Bacteroides fragilis (strain YCH46).